We begin with the raw amino-acid sequence, 89 residues long: Small ribosomal subunit protein uS19 (89 aa).

It belongs to the universal ribosomal protein uS19 family.

Functionally, protein S19 forms a complex with S13 that binds strongly to the 16S ribosomal RNA. The protein is Small ribosomal subunit protein uS19 of Rhodopirellula baltica (strain DSM 10527 / NCIMB 13988 / SH1).